The chain runs to 260 residues: tRNA (guanine-N(7)-)-methyltransferase (260 aa).

The interval 1 to 37 (MIHDPNDAGLPDQLPTPSSEAENSPAGDTTPPEEALH) is disordered. 4 residues coordinate S-adenosyl-L-methionine: Glu90, Glu115, Asp142, and Asp165. Asp165 is an active-site residue. Residues Lys169, Asp201, and 236-239 (TKFE) contribute to the substrate site.

The protein belongs to the class I-like SAM-binding methyltransferase superfamily. TrmB family.

The catalysed reaction is guanosine(46) in tRNA + S-adenosyl-L-methionine = N(7)-methylguanosine(46) in tRNA + S-adenosyl-L-homocysteine. Its pathway is tRNA modification; N(7)-methylguanine-tRNA biosynthesis. Functionally, catalyzes the formation of N(7)-methylguanine at position 46 (m7G46) in tRNA. The sequence is that of tRNA (guanine-N(7)-)-methyltransferase from Paraburkholderia xenovorans (strain LB400).